The primary structure comprises 279 residues: Histone chaperone ASF1 (279 aa).

Residues 1–143 are interaction with HIR1; the sequence is MSIVSLLGIK…HIVRNILAEK (143 aa). Residues 1–155 are interaction with histone H3, histone H4, RAD53 and the RF-C complex; it reads MSIVSLLGIK…VTRFNIVWDN (155 aa). Residues 156-279 form a disordered region; it reads ENEGDLYPPE…TPKDAARSTN (124 aa). Positions 168–244 are enriched in acidic residues; the sequence is GVDDEEEEDD…DEEEGEEEVG (77 aa). The stretch at 192 to 243 forms a coiled coil; it reads DDQEDGEGEAEEAAEEEEEEEEKTEDNETNLEEEEEDIENSDGDEEEGEEEV. Composition is skewed to basic and acidic residues over residues 245 to 254 and 269 to 279; these read SVDKNEDGND and STPKDAARSTN.

Belongs to the ASF1 family. Interacts with histone H3/H4 heterodimers via both histone H3 and histone H4. Binds with higher affinity to H3/H4 heterodimers where histone H3 has been pre-acetylated on 'Lys-14'. Interacts with RAD53 and this may impair interaction with histones and chromatin assembly; the interaction is reduced upon activation of DNA damage or replication checkpoints which in turn promotes histone binding and chromatin assembly. Interacts with the CAC2 subunit of chromatin assembly factor 1 (CAF-1). Interacts with the HIR1, HIR2, HIR3 and HPC2 subunits of the HIR complex. Interacts with the RFC1, RFC2, RFC3, RFC4 and RFC5 subunits of the replication factor C (RF-C/RFC) complex; which may recruit this protein to DNA. Interacts with the SAS2, SAS4 and SAS5 subunits of the SAS/SAS-I complex. Interacts with the BDF1, BDF2, SPT15, TAF1 and TAF7 subunits of the TFIID complex. Interacts with RTT109 and VPS75; the interaction with RTT109 is direct.

Its subcellular location is the nucleus. Histone chaperone that facilitates histone deposition and histone exchange and removal during nucleosome assembly and disassembly. Facilitates histone deposition through both replication-dependent and replication-independent chromatin assembly pathways. Cooperates with chromatin assembly factor 1 (CAF-1) to promote replication-dependent chromatin assembly and with the HIR complex to promote replication-independent chromatin assembly, which may occur during transcription and DNA repair. May be required for the maintenance of a subset of replication elongation factors, including DNA polymerase epsilon, the RFC complex and PCNA, at stalled replication forks. Also required for RTT109-dependent acetylation of histone H3 on 'Lys-9' and 'Lys-56'. Promotion of RTT109-mediated histone H3 'Lys-56' acetylation is dependent on interactions with histone H3 pre-acetylated on 'Lys-14'. In Saccharomyces cerevisiae (strain ATCC 204508 / S288c) (Baker's yeast), this protein is Histone chaperone ASF1.